The chain runs to 808 residues: Protein tortoise (808 aa).

The stretch at 43–78 (KDRKELYSLNNDSIKKKLNQLKDETNQLLKERGEEL) forms a coiled coil. The interval 152-171 (LTSGGANKKKSPFLEDNNNK) is disordered. The stretch at 694-733 (EDLDFQIEELELMIKNKKILEREIKAHNEKISKIIKDSRD) forms a coiled coil.

Its subcellular location is the mitochondrion. In terms of biological role, required for efficient chemotaxis. The sequence is that of Protein tortoise (torA) from Dictyostelium discoideum (Social amoeba).